The following is a 583-amino-acid chain: MSVVESSLPGVLRERASFQPNDKALTFIDYERSWDGVEETLTWSQLYRRTLNLAAQLREHGSTGDRALILAPQSLDYVVSFIASLQAGIVAVPLSIPQGGAHDERTVSVFADTAPAIVLTASSVVDNVVEYVQPQPGQNAPAVIEVDRLDLDARPSSGSRSAAHGHPDILYLQYTSGSTRTPAGVMVSNKNLFANFEQIMTSYYGVYGKVAPPGSTVVSWLPFYHDMGFVLGLILPILAGIPAVLTSPIGFLQRPARWIQMLASNTLAFTAAPNFAFDLASRKTKDEDMEGLDLGGVHGILNGSERVQPVTLKRFIDRFAPFNLDPKAIRPSYGMAEATVYVATRKAGQPPKIVQFDPQKLPDGQAERTESDGGTPLVSYGIVDTQLVRIVDPDTGIERPAGTIGEIWVHGDNVAIGYWQKPEATERTFSATIVNPSEGTPAGPWLRTGDSGFLSEGELFIMGRIKDLLIVYGRNHSPDDIEATIQTISPGRCAAIAVSEHGAEKLVAIIELKKKDESDDEAAERLGFVKREVTSAISKSHGLSVADLVLVSPGSIPITTSGKIRRAQCVELYRQDEFTRLDA.

3 consecutive transmembrane segments (helical) span residues 77–97, 109–129, and 229–249; these read YVVSFIASLQAGIVAVPLSIP, VFADTAPAIVLTASSVVDNVV, and FVLGLILPILAGIPAVLTSPI. The disordered stretch occupies residues 353–375; that stretch reads IVQFDPQKLPDGQAERTESDGGT.

It belongs to the ATP-dependent AMP-binding enzyme family.

It localises to the cell membrane. The chain is Putative fatty-acid--CoA ligase fadD25 (fadD25) from Mycobacterium tuberculosis (strain CDC 1551 / Oshkosh).